A 477-amino-acid polypeptide reads, in one-letter code: Methylenetetrahydrofolate--tRNA-(uracil-5-)-methyltransferase TrmFO (477 aa).

Residue 15 to 20 (GAGLAG) coordinates FAD.

It belongs to the MnmG family. TrmFO subfamily. The cofactor is FAD.

It localises to the cytoplasm. The enzyme catalyses uridine(54) in tRNA + (6R)-5,10-methylene-5,6,7,8-tetrahydrofolate + NADH + H(+) = 5-methyluridine(54) in tRNA + (6S)-5,6,7,8-tetrahydrofolate + NAD(+). The catalysed reaction is uridine(54) in tRNA + (6R)-5,10-methylene-5,6,7,8-tetrahydrofolate + NADPH + H(+) = 5-methyluridine(54) in tRNA + (6S)-5,6,7,8-tetrahydrofolate + NADP(+). In terms of biological role, catalyzes the folate-dependent formation of 5-methyl-uridine at position 54 (M-5-U54) in all tRNAs. The chain is Methylenetetrahydrofolate--tRNA-(uracil-5-)-methyltransferase TrmFO from Rhodopseudomonas palustris (strain BisB5).